We begin with the raw amino-acid sequence, 255 residues long: NAD kinase (255 aa).

Asp-44 (proton acceptor) is an active-site residue. NAD(+) contacts are provided by residues 44–45, 114–115, Asp-144, Ala-152, and 155–160; these read DG, NE, and TAYNLS.

This sequence belongs to the NAD kinase family. The cofactor is a divalent metal cation.

It is found in the cytoplasm. It carries out the reaction NAD(+) + ATP = ADP + NADP(+) + H(+). Involved in the regulation of the intracellular balance of NAD and NADP, and is a key enzyme in the biosynthesis of NADP. Catalyzes specifically the phosphorylation on 2'-hydroxyl of the adenosine moiety of NAD to yield NADP. This is NAD kinase from Hyphomonas neptunium (strain ATCC 15444).